A 110-amino-acid polypeptide reads, in one-letter code: Large ribosomal subunit protein uL24 (110 aa).

Belongs to the universal ribosomal protein uL24 family. In terms of assembly, part of the 50S ribosomal subunit.

Functionally, one of two assembly initiator proteins, it binds directly to the 5'-end of the 23S rRNA, where it nucleates assembly of the 50S subunit. In terms of biological role, one of the proteins that surrounds the polypeptide exit tunnel on the outside of the subunit. This Desulfovibrio desulfuricans (strain ATCC 27774 / DSM 6949 / MB) protein is Large ribosomal subunit protein uL24.